Consider the following 240-residue polypeptide: Methylthioribulose-1-phosphate dehydratase (240 aa).

A compositionally biased stretch (polar residues) spans 1–17 (MAQEVENNNNDHLVQSS). The disordered stretch occupies residues 1–20 (MAQEVENNNNDHLVQSSDPE). C100 serves as a coordination point for substrate. Positions 117 and 119 each coordinate Zn(2+). E146 acts as the Proton donor/acceptor in catalysis. H202 is a Zn(2+) binding site.

It belongs to the aldolase class II family. MtnB subfamily. It depends on Zn(2+) as a cofactor.

The protein resides in the cytoplasm. The catalysed reaction is 5-(methylsulfanyl)-D-ribulose 1-phosphate = 5-methylsulfanyl-2,3-dioxopentyl phosphate + H2O. The protein operates within amino-acid biosynthesis; L-methionine biosynthesis via salvage pathway; L-methionine from S-methyl-5-thio-alpha-D-ribose 1-phosphate: step 2/6. In terms of biological role, catalyzes the dehydration of methylthioribulose-1-phosphate (MTRu-1-P) into 2,3-diketo-5-methylthiopentyl-1-phosphate (DK-MTP-1-P). This Neosartorya fischeri (strain ATCC 1020 / DSM 3700 / CBS 544.65 / FGSC A1164 / JCM 1740 / NRRL 181 / WB 181) (Aspergillus fischerianus) protein is Methylthioribulose-1-phosphate dehydratase.